The sequence spans 153 residues: MSIIDNRKASHDYFIEDRYEAGLVLQGWEVKSIRAGRVQLKESYVIVRDGELFLLGMHVSPLPTASTHIHPDAMRTRKLLLKAEEIHKLIGKVEQRGFTLVPLNLHYKNGRVKLDFALGRGKKLYDKRDTSREKDWLRERERVMKHDTRRRSD.

Positions 132–153 (REKDWLRERERVMKHDTRRRSD) are disordered.

This sequence belongs to the SmpB family.

Its subcellular location is the cytoplasm. In terms of biological role, required for rescue of stalled ribosomes mediated by trans-translation. Binds to transfer-messenger RNA (tmRNA), required for stable association of tmRNA with ribosomes. tmRNA and SmpB together mimic tRNA shape, replacing the anticodon stem-loop with SmpB. tmRNA is encoded by the ssrA gene; the 2 termini fold to resemble tRNA(Ala) and it encodes a 'tag peptide', a short internal open reading frame. During trans-translation Ala-aminoacylated tmRNA acts like a tRNA, entering the A-site of stalled ribosomes, displacing the stalled mRNA. The ribosome then switches to translate the ORF on the tmRNA; the nascent peptide is terminated with the 'tag peptide' encoded by the tmRNA and targeted for degradation. The ribosome is freed to recommence translation, which seems to be the essential function of trans-translation. The protein is SsrA-binding protein of Bordetella avium (strain 197N).